Reading from the N-terminus, the 85-residue chain is Large ribosomal subunit protein bL27 (85 aa).

The tract at residues 1–20 (MATKKAGGSTRNGRDSEAKR) is disordered.

It belongs to the bacterial ribosomal protein bL27 family.

This Pasteurella multocida (strain Pm70) protein is Large ribosomal subunit protein bL27.